We begin with the raw amino-acid sequence, 298 residues long: Phosphatidylglycerol--prolipoprotein diacylglyceryl transferase (298 aa).

3 consecutive transmembrane segments (helical) span residues 17–37, 59–79, and 97–117; these read LAVRWYGLMYLVGFIAAIVVG, MMFYGVLGTVLGGRLGYVLFY, and GGMSFHGGFLGVTLAMMLFAW. Residue R142 coordinates a 1,2-diacyl-sn-glycero-3-phospho-(1'-sn-glycerol). A run of 2 helical transmembrane segments spans residues 230–250 and 257–277; these read MGAISALFLIGYGLARFTVEF and FLGLLALGLSMGQWLSLPMIV.

It belongs to the Lgt family.

It is found in the cell inner membrane. The catalysed reaction is L-cysteinyl-[prolipoprotein] + a 1,2-diacyl-sn-glycero-3-phospho-(1'-sn-glycerol) = an S-1,2-diacyl-sn-glyceryl-L-cysteinyl-[prolipoprotein] + sn-glycerol 1-phosphate + H(+). The protein operates within protein modification; lipoprotein biosynthesis (diacylglyceryl transfer). Catalyzes the transfer of the diacylglyceryl group from phosphatidylglycerol to the sulfhydryl group of the N-terminal cysteine of a prolipoprotein, the first step in the formation of mature lipoproteins. The polypeptide is Phosphatidylglycerol--prolipoprotein diacylglyceryl transferase (Burkholderia cenocepacia (strain ATCC BAA-245 / DSM 16553 / LMG 16656 / NCTC 13227 / J2315 / CF5610) (Burkholderia cepacia (strain J2315))).